The chain runs to 206 residues: Isochorismatase domain-containing protein 2A (206 aa).

The residue at position 26 (Lys26) is an N6-succinyllysine. N6-acetyllysine; alternate is present on residues Lys93 and Lys178. An N6-succinyllysine; alternate mark is found at Lys93 and Lys178. N6-acetyllysine occurs at positions 182 and 185.

This sequence belongs to the isochorismatase family. Interacts with CDKN2A. In terms of tissue distribution, ubiquitous. Expressed predominantly in uterus, stomach and urinary tract.

The protein resides in the cytoplasm. It is found in the nucleus. This chain is Isochorismatase domain-containing protein 2A, found in Mus musculus (Mouse).